Reading from the N-terminus, the 325-residue chain is CRISPR-associated endonuclease Cas1 3 (325 aa).

The Mn(2+) site is built by Glu-152, His-217, and Glu-232.

This sequence belongs to the CRISPR-associated endonuclease Cas1 family. As to quaternary structure, homodimer, forms a heterotetramer with a Cas2 homodimer. It depends on Mg(2+) as a cofactor. The cofactor is Mn(2+).

Its function is as follows. CRISPR (clustered regularly interspaced short palindromic repeat), is an adaptive immune system that provides protection against mobile genetic elements (viruses, transposable elements and conjugative plasmids). CRISPR clusters contain spacers, sequences complementary to antecedent mobile elements, and target invading nucleic acids. CRISPR clusters are transcribed and processed into CRISPR RNA (crRNA). Acts as a dsDNA endonuclease. Involved in the integration of spacer DNA into the CRISPR cassette. This is CRISPR-associated endonuclease Cas1 3 from Thermodesulfovibrio yellowstonii (strain ATCC 51303 / DSM 11347 / YP87).